Here is a 203-residue protein sequence, read N- to C-terminus: Holliday junction branch migration complex subunit RuvA (203 aa).

The domain I stretch occupies residues Met-1–Asn-64. The interval Asn-65–Pro-142 is domain II. The tract at residues Ala-143–Pro-154 is flexible linker. The tract at residues Ala-155 to Leu-203 is domain III.

The protein belongs to the RuvA family. In terms of assembly, homotetramer. Forms an RuvA(8)-RuvB(12)-Holliday junction (HJ) complex. HJ DNA is sandwiched between 2 RuvA tetramers; dsDNA enters through RuvA and exits via RuvB. An RuvB hexamer assembles on each DNA strand where it exits the tetramer. Each RuvB hexamer is contacted by two RuvA subunits (via domain III) on 2 adjacent RuvB subunits; this complex drives branch migration. In the full resolvosome a probable DNA-RuvA(4)-RuvB(12)-RuvC(2) complex forms which resolves the HJ.

Its subcellular location is the cytoplasm. The RuvA-RuvB-RuvC complex processes Holliday junction (HJ) DNA during genetic recombination and DNA repair, while the RuvA-RuvB complex plays an important role in the rescue of blocked DNA replication forks via replication fork reversal (RFR). RuvA specifically binds to HJ cruciform DNA, conferring on it an open structure. The RuvB hexamer acts as an ATP-dependent pump, pulling dsDNA into and through the RuvAB complex. HJ branch migration allows RuvC to scan DNA until it finds its consensus sequence, where it cleaves and resolves the cruciform DNA. In Shigella flexneri serotype 5b (strain 8401), this protein is Holliday junction branch migration complex subunit RuvA.